A 684-amino-acid chain; its full sequence is UvrABC system protein B (684 aa).

One can recognise a Helicase ATP-binding domain in the interval Glu30 to Arg188. Residue Gly43 to Thr50 coordinates ATP. A Beta-hairpin motif is present at residues Tyr96–Ile119. The Helicase C-terminal domain occupies Gln435–Leu601. One can recognise a UVR domain in the interval Tyr641–Arg676.

The protein belongs to the UvrB family. As to quaternary structure, forms a heterotetramer with UvrA during the search for lesions. Interacts with UvrC in an incision complex.

Its subcellular location is the cytoplasm. Functionally, the UvrABC repair system catalyzes the recognition and processing of DNA lesions. A damage recognition complex composed of 2 UvrA and 2 UvrB subunits scans DNA for abnormalities. Upon binding of the UvrA(2)B(2) complex to a putative damaged site, the DNA wraps around one UvrB monomer. DNA wrap is dependent on ATP binding by UvrB and probably causes local melting of the DNA helix, facilitating insertion of UvrB beta-hairpin between the DNA strands. Then UvrB probes one DNA strand for the presence of a lesion. If a lesion is found the UvrA subunits dissociate and the UvrB-DNA preincision complex is formed. This complex is subsequently bound by UvrC and the second UvrB is released. If no lesion is found, the DNA wraps around the other UvrB subunit that will check the other stand for damage. The sequence is that of UvrABC system protein B from Chlorobium limicola (strain DSM 245 / NBRC 103803 / 6330).